A 603-amino-acid polypeptide reads, in one-letter code: NADH-ubiquinone oxidoreductase chain 5 (603 aa).

Transmembrane regions (helical) follow at residues 4–24 (YTTM…TTLI), 38–58 (SIIA…MCLD), 87–107 (MTFI…SLWY), 122–142 (LIFL…QLFI), 144–160 (WEGV…WWYA), 171–191 (AILY…WFLL), 211–233 (TPLL…HPWL), 241–261 (TPVS…FLLI), 272–292 (LIQT…AICA), 301–320 (IVAF…IGIN), 325–347 (AFLH…GSII), 370–390 (STSL…TGFY), 407–429 (WALS…MILL), 457–477 (LTIG…PMST), 482–502 (IPLY…LTAL), and 583–603 (MIKL…LLIM).

Belongs to the complex I subunit 5 family. In terms of assembly, core subunit of respiratory chain NADH dehydrogenase (Complex I) which is composed of 45 different subunits.

It localises to the mitochondrion inner membrane. The catalysed reaction is a ubiquinone + NADH + 5 H(+)(in) = a ubiquinol + NAD(+) + 4 H(+)(out). Its function is as follows. Core subunit of the mitochondrial membrane respiratory chain NADH dehydrogenase (Complex I) which catalyzes electron transfer from NADH through the respiratory chain, using ubiquinone as an electron acceptor. Essential for the catalytic activity and assembly of complex I. This chain is NADH-ubiquinone oxidoreductase chain 5 (MT-ND5), found in Pan paniscus (Pygmy chimpanzee).